A 418-amino-acid polypeptide reads, in one-letter code: Alditol oxidase (418 aa).

Residues Ile13–Ala179 enclose the FAD-binding PCMH-type domain. Residues Val41–Ser47, Ser106, Ser111, Gly114, Thr118–His121, and Val169 contribute to the FAD site. His46 carries the pros-8alpha-FAD histidine modification. Ser106 is a D-sorbitol binding site. Ser106 contacts xylitol. Residues Glu320, Arg322, and Thr345 each contribute to the D-sorbitol site. Glu320, Arg322, and Thr345 together coordinate xylitol. Arg322 contacts FAD. FAD is bound at residue His372. Residue Lys375 participates in D-sorbitol binding. A xylitol-binding site is contributed by Lys375.

It belongs to the oxygen-dependent FAD-linked oxidoreductase family. Monomer. The cofactor is FAD.

The catalysed reaction is an alditol + O2 = an aldose + H2O2. It catalyses the reaction xylitol + O2 = D-xylose + H2O2. It carries out the reaction D-sorbitol + O2 = D-glucose + H2O2. Oxidase that performs selective oxidation of the terminal primary hydroxyl group of several alditols, with a reduction of O2 to H2O2. Shows highest activity on xylitol and D-sorbitol, and a poor efficiency with D-mannitol and L-threitol. This Streptomyces coelicolor (strain ATCC BAA-471 / A3(2) / M145) protein is Alditol oxidase (xyoA).